The chain runs to 256 residues: Thiazole synthase (256 aa).

Lysine 95 acts as the Schiff-base intermediate with DXP in catalysis. Residues glycine 156, 182–183, and 204–205 each bind 1-deoxy-D-xylulose 5-phosphate; these read AG and NT.

The protein belongs to the ThiG family. In terms of assembly, homotetramer. Forms heterodimers with either ThiH or ThiS.

It localises to the cytoplasm. It catalyses the reaction [ThiS sulfur-carrier protein]-C-terminal-Gly-aminoethanethioate + 2-iminoacetate + 1-deoxy-D-xylulose 5-phosphate = [ThiS sulfur-carrier protein]-C-terminal Gly-Gly + 2-[(2R,5Z)-2-carboxy-4-methylthiazol-5(2H)-ylidene]ethyl phosphate + 2 H2O + H(+). It functions in the pathway cofactor biosynthesis; thiamine diphosphate biosynthesis. In terms of biological role, catalyzes the rearrangement of 1-deoxy-D-xylulose 5-phosphate (DXP) to produce the thiazole phosphate moiety of thiamine. Sulfur is provided by the thiocarboxylate moiety of the carrier protein ThiS. In vitro, sulfur can be provided by H(2)S. The protein is Thiazole synthase of Photobacterium profundum (strain SS9).